The following is a 250-amino-acid chain: Protein lin-28 homolog B (250 aa).

Disordered stretches follow at residues 1–27 (MAEA…ESPL) and 98–126 (RVTG…KPKG). Positions 9–18 (GGEEPGRLPE) are enriched in basic and acidic residues. One can recognise a CSD domain in the interval 29-102 (HGAGHCKWFN…GLESIRVTGP (74 aa)). A compositionally biased stretch (basic residues) spans 114–125 (PKGKTVQKRKPK). CCHC-type zinc fingers lie at residues 127-144 (DRCY…ECSL) and 149-166 (KKCH…NCPH). Zn(2+) is bound by residues Cys-129, Cys-132, His-137, Cys-142, Cys-151, Cys-154, His-159, and Cys-164. A disordered region spans residues 165–250 (PHKTVSQQPT…GPSVQKRKKT (86 aa)). Positions 168-177 (TVSQQPTSSQ) are enriched in polar residues. Positions 200–209 (GYSSPSYSQE) are enriched in low complexity. Over residues 210–219 (GRSEISERSG) the composition is skewed to basic and acidic residues.

It belongs to the lin-28 family.

It is found in the nucleus. The protein resides in the nucleolus. Functionally, suppressor of specific microRNA (miRNA) biogenesis. Binds target primary miRNA transcripts and sequester them in the nucleolus, away from the microprocessor complex, hence preventing their processing into mature miRNA. The specific interaction with target pri-miRNAs occurs via an 5'-GGAG-3' motif in the pre-miRNA terminal loop. This chain is Protein lin-28 homolog B (LIN28B), found in Gallus gallus (Chicken).